We begin with the raw amino-acid sequence, 183 residues long: Negative modulator of initiation of replication (183 aa).

The segment at 118-122 (RTRIY) is interaction with DNA.

This sequence belongs to the SeqA family. Homodimer. Polymerizes to form helical filaments.

The protein resides in the cytoplasm. In terms of biological role, negative regulator of replication initiation, which contributes to regulation of DNA replication and ensures that replication initiation occurs exactly once per chromosome per cell cycle. Binds to pairs of hemimethylated GATC sequences in the oriC region, thus preventing assembly of replication proteins and re-initiation at newly replicated origins. Repression is relieved when the region becomes fully methylated. This Proteus mirabilis (strain HI4320) protein is Negative modulator of initiation of replication.